The following is a 719-amino-acid chain: DNA ligase (719 aa).

Residues 42–46 (DAAYD), 92–93 (SL), and glutamate 126 each bind NAD(+). Residue lysine 128 is the N6-AMP-lysine intermediate of the active site. The NAD(+) site is built by arginine 149, glutamate 185, lysine 301, and lysine 325. Residues cysteine 430, cysteine 433, cysteine 448, and cysteine 454 each contribute to the Zn(2+) site. In terms of domain architecture, BRCT spans 640–719 (ATGSPVEGKT…DDWFKLVGED (80 aa)).

It belongs to the NAD-dependent DNA ligase family. LigA subfamily. Requires Mg(2+) as cofactor. It depends on Mn(2+) as a cofactor.

The catalysed reaction is NAD(+) + (deoxyribonucleotide)n-3'-hydroxyl + 5'-phospho-(deoxyribonucleotide)m = (deoxyribonucleotide)n+m + AMP + beta-nicotinamide D-nucleotide.. Its function is as follows. DNA ligase that catalyzes the formation of phosphodiester linkages between 5'-phosphoryl and 3'-hydroxyl groups in double-stranded DNA using NAD as a coenzyme and as the energy source for the reaction. It is essential for DNA replication and repair of damaged DNA. This chain is DNA ligase, found in Brucella melitensis biotype 2 (strain ATCC 23457).